Here is a 634-residue protein sequence, read N- to C-terminus: Probable threonine--tRNA ligase, cytoplasmic (634 aa).

A TGS domain is found at 1-61 (MSIYVTFKGQ…NENQKIELYD (61 aa)).

It belongs to the class-II aminoacyl-tRNA synthetase family.

The protein localises to the cytoplasm. The enzyme catalyses tRNA(Thr) + L-threonine + ATP = L-threonyl-tRNA(Thr) + AMP + diphosphate + H(+). The polypeptide is Probable threonine--tRNA ligase, cytoplasmic (Enterocytozoon bieneusi (strain H348) (Microsporidian parasite)).